We begin with the raw amino-acid sequence, 361 residues long: NADP-dependent alcohol dehydrogenase 7 (361 aa).

Residue cysteine 46 participates in Zn(2+) binding. Residues glycine 47 and histidine 51 each contribute to the NADP(+) site. Zn(2+)-binding residues include histidine 68, cysteine 100, cysteine 103, cysteine 106, cysteine 114, and cysteine 164. Isoleucine 189, glycine 191, isoleucine 192, serine 211, arginine 212, lysine 216, cysteine 251, serine 253, serine 256, isoleucine 276, serine 300, and isoleucine 302 together coordinate NADP(+). At serine 316 the chain carries Phosphoserine. NADP(+) is bound at residue arginine 349.

The protein belongs to the zinc-containing alcohol dehydrogenase family. In terms of assembly, homodimer. Zn(2+) is required as a cofactor.

It carries out the reaction a primary alcohol + NADP(+) = an aldehyde + NADPH + H(+). It catalyses the reaction (E)-cinnamyl alcohol + NADP(+) = (E)-cinnamaldehyde + NADPH + H(+). The enzyme catalyses 3-methylbutanol + NADP(+) = 3-methylbutanal + NADPH + H(+). Its function is as follows. NADP-dependent alcohol dehydrogenase with a broad substrate specificity. The oxidative reactions are more than 100 times less efficient than the corresponding reductions, suggesting that the enzyme acts as an aldehyde reductase, rather than as an alcohol dehydrogenase. In Saccharomyces cerevisiae (strain ATCC 204508 / S288c) (Baker's yeast), this protein is NADP-dependent alcohol dehydrogenase 7 (ADH7).